Here is a 195-residue protein sequence, read N- to C-terminus: UPF0301 protein CCNA_03506 (195 aa).

Belongs to the UPF0301 (AlgH) family.

This Caulobacter vibrioides (strain NA1000 / CB15N) (Caulobacter crescentus) protein is UPF0301 protein CCNA_03506.